The primary structure comprises 558 residues: Potassium-transporting ATPase potassium-binding subunit (558 aa).

Transmembrane regions (helical) follow at residues 1-21 (MEII…SGYL), 66-86 (FNGF…WLFL), 127-147 (MIVM…VCIA), 166-186 (IVRF…ILLM), 245-265 (IWSN…MLFL), 281-301 (ALIL…LTMW), 327-347 (FGAG…TGSV), 354-374 (LTPI…VFGG), 377-397 (VGLM…SLMV), 416-436 (IVLV…LAFM), 482-502 (ISTG…QLMI), and 531-551 (IVFI…LGPI).

This sequence belongs to the KdpA family. In terms of assembly, the system is composed of three essential subunits: KdpA, KdpB and KdpC.

It localises to the cell membrane. In terms of biological role, part of the high-affinity ATP-driven potassium transport (or Kdp) system, which catalyzes the hydrolysis of ATP coupled with the electrogenic transport of potassium into the cytoplasm. This subunit binds the extracellular potassium ions and delivers the ions to the membrane domain of KdpB through an intramembrane tunnel. The sequence is that of Potassium-transporting ATPase potassium-binding subunit from Staphylococcus aureus (strain USA300).